The primary structure comprises 301 residues: MKIDLTNLITESRNTASQHIDTLSTIDMLKVINDEDKKVALAVEKTLPEISQVVDAITEAFKKGGRLIYTGAGTSGRLGILDASECPPTYGSKPEQVVGLIAGGHTAILRAVENAEDNRELGEGDLKGLNFNEKDVLVGIAASGRTPYVLGAMAYAKSVNATVACISCNPNSPMTAAADISITPVVGAEVVTGSSRMKAGTAQKLVLNMLTTGAMIRSGKVFGNLMVDVEATNAKLVERQKKIVIEATDCSREEAESALAACNGHCKTAIVMVLAQLSAEEAKQLLDNNKGFIRAAIAAGK.

In terms of domain architecture, SIS spans 57-220 (ITEAFKKGGR…TTGAMIRSGK (164 aa)). Glu85 serves as the catalytic Proton donor. The active site involves Glu116.

This sequence belongs to the GCKR-like family. MurNAc-6-P etherase subfamily. As to quaternary structure, homodimer.

The catalysed reaction is N-acetyl-D-muramate 6-phosphate + H2O = N-acetyl-D-glucosamine 6-phosphate + (R)-lactate. The protein operates within amino-sugar metabolism; 1,6-anhydro-N-acetylmuramate degradation. Its pathway is amino-sugar metabolism; N-acetylmuramate degradation. It participates in cell wall biogenesis; peptidoglycan recycling. Functionally, specifically catalyzes the cleavage of the D-lactyl ether substituent of MurNAc 6-phosphate, producing GlcNAc 6-phosphate and D-lactate. Together with AnmK, is also required for the utilization of anhydro-N-acetylmuramic acid (anhMurNAc) either imported from the medium or derived from its own cell wall murein, and thus plays a role in cell wall recycling. This Photobacterium profundum (strain SS9) protein is N-acetylmuramic acid 6-phosphate etherase.